A 379-amino-acid polypeptide reads, in one-letter code: Homoserine O-succinyltransferase (379 aa).

An AB hydrolase-1 domain is found at 48–357; sequence NAVLICHALS…SAHGHDAFLM (310 aa). Catalysis depends on serine 154, which acts as the Nucleophile. Arginine 224 contacts substrate. Active-site residues include aspartate 319 and histidine 352. Residue aspartate 353 coordinates substrate.

The protein belongs to the AB hydrolase superfamily. MetX family. Homodimer.

It localises to the cytoplasm. The catalysed reaction is L-homoserine + succinyl-CoA = O-succinyl-L-homoserine + CoA. It participates in amino-acid biosynthesis; L-methionine biosynthesis via de novo pathway; O-succinyl-L-homoserine from L-homoserine: step 1/1. With respect to regulation, activity increases in the presence of MetW. Functionally, transfers a succinyl group from succinyl-CoA to L-homoserine, forming succinyl-L-homoserine. The sequence is that of Homoserine O-succinyltransferase from Neisseria gonorrhoeae.